A 160-amino-acid polypeptide reads, in one-letter code: Large ribosomal subunit protein uL10 (160 aa).

It belongs to the universal ribosomal protein uL10 family. Part of the ribosomal stalk of the 50S ribosomal subunit. The N-terminus interacts with L11 and the large rRNA to form the base of the stalk. The C-terminus forms an elongated spine to which L12 dimers bind in a sequential fashion forming a multimeric L10(L12)X complex.

In terms of biological role, forms part of the ribosomal stalk, playing a central role in the interaction of the ribosome with GTP-bound translation factors. The polypeptide is Large ribosomal subunit protein uL10 (Ehrlichia canis (strain Jake)).